Reading from the N-terminus, the 331-residue chain is Isopenicillin N synthase (331 aa).

Isopenicillin N is bound by residues R87, Y91, S183, and Y189. N-[(5S)-5-amino-5-carboxypentanoyl]-L-cysteinyl-D-valine-binding residues include R87, Y91, S183, Y189, H214, and D216. Residues 181 to 288 form the Fe2OG dioxygenase domain; sequence LSSVVLIRYP…RQSLPFFVNL (108 aa). Fe(2+) contacts are provided by H214, D216, and H270. A 2-oxoglutarate-binding site is contributed by R279. An isopenicillin N-binding site is contributed by S281. S281 contributes to the N-[(5S)-5-amino-5-carboxypentanoyl]-L-cysteinyl-D-valine binding site.

Belongs to the iron/ascorbate-dependent oxidoreductase family. Requires Fe(2+) as cofactor.

The protein resides in the cytoplasm. It localises to the cytosol. The catalysed reaction is N-[(5S)-5-amino-5-carboxypentanoyl]-L-cysteinyl-D-valine + O2 = isopenicillin N + 2 H2O. It participates in antibiotic biosynthesis; penicillin G biosynthesis; penicillin G from L-alpha-aminoadipate and L-cysteine and L-valine: step 2/3. Its function is as follows. Isopenicillin N synthase; part of the gene cluster that mediates the biosynthesis of penicillin, the world's most important antibiotic. The first step of the pathway is performed by the trimodular NRPS acvA that produces the tripeptide N-[(5S)-5-amino-5-carboxypentanoyl]-L-cysteinyl-D-valine (LLD-ACV or ACV) via condensation of the 3 residues L-2-aminoadipate, L-cysteine and L-valine. The precursor amino acids for penicillin biosynthesis are withdrawn from the vacuolar amino acid pool by the MFS-type transporter penV. Each of the constituent amino acids of the tripeptide acv are activated as aminoacyl-adenylates with peptide bonds formed through the participation of amino acid thioester intermediates. The tripeptide ACV is then cyclized to form isopenicillin N (IPN) by the isopenicillin N synthase ipnA that forms the beta-lactam nucleus. Finally, the alpha-aminoadipyl side chain is exchanged for phenylacetic acid by the isopenicillin N acyltransferase aatA to yield penicillin. This step occurs in the peroxisomal matrix and the penM and paaT transporters are involved in the isopenicillin N and phenylacetic acid import into the peroxisome, respectively. This is Isopenicillin N synthase from Penicillium rubens (strain ATCC 28089 / DSM 1075 / NRRL 1951 / Wisconsin 54-1255) (Penicillium chrysogenum).